A 539-amino-acid chain; its full sequence is Phosphatidylinositol 4-phosphate 5-kinase type-1 beta (539 aa).

The interval 1 to 21 (MSSTAENGDAVPGKQNEEKTY) is disordered. The PIPK domain occupies 25–395 (ASSAIKGAIQ…RFLKFMNSRV (371 aa)). A phosphoserine mark is found at Ser-445, Ser-447, and Ser-448.

In terms of assembly, interacts with RAC1, AJUBA, PLD1, PLD2 and ARF1.

The protein localises to the cytoplasm. It is found in the cytosol. It localises to the cell membrane. The protein resides in the endomembrane system. The enzyme catalyses a 1,2-diacyl-sn-glycero-3-phospho-(1D-myo-inositol 4-phosphate) + ATP = a 1,2-diacyl-sn-glycero-3-phospho-(1D-myo-inositol-4,5-bisphosphate) + ADP + H(+). The catalysed reaction is 1-octadecanoyl-2-(5Z,8Z,11Z,14Z)-eicosatetraenoyl-sn-glycero-3-phospho-1D-myo-inositol 4-phosphate + ATP = 1-octadecanoyl-2-(5Z,8Z,11Z,14Z)-eicosatetraenoyl-sn-glycero-3-phospho-1D-myo-inositol 4,5-bisphosphate + ADP + H(+). It catalyses the reaction 1-octadecanoyl-2-(9Z)-octadecenoyl-sn-glycero-3-phospho-1D-myo-inositol 4-phosphate + ATP = 1-octadecanoyl-2-(9Z)-octadecenoyl-sn-glycero-3-phospho-1D-myo-inositol 4,5-bisphosphate + ADP + H(+). It carries out the reaction 1-octadecanoyl-2-(9Z)-octadecenoyl-sn-glycero-3-phospho-1D-myo-inositol + ATP = 1-octadecanoyl-2-(9Z)-octadecenoyl-sn-glycero-3-phospho-1D-myo-inositol 5-phosphate + ADP + H(+). The enzyme catalyses 1-octadecanoyl-2-(9Z,12Z)-octadecadienoyl-sn-glycero-3-phospho-1D-myo-inositol + ATP = 1-octadecanoyl-2-(9Z,12Z)-octadecadienoyl-sn-glycero-3-phospho-1D-myo-inositol 5-phosphate + ADP + H(+). The catalysed reaction is 1-octadecanoyl-2-(5Z,8Z,11Z,14Z-eicosatetraenoyl)-sn-glycero-3-phospho-(1D-myo-inositol) + ATP = 1-octadecanoyl-2-(5Z,8Z,11Z,14Z)-eicosatetraenoyl-sn-glycero-3-phospho-1D-myo-inositol 5-phosphate + ADP + H(+). It catalyses the reaction 1,2-di-(9Z,12Z)-octadecadienoyl-sn-glycero-3-phospho-1D-myo-inositol + ATP = 1,2-di(9Z,12Z)-octadecadienoyl-sn-glycero-3-phospho-1D-myo-inositol 5-phosphate + ADP + H(+). Catalyzes the phosphorylation of phosphatidylinositol 4-phosphate (PtdIns(4)P/PI4P) to form phosphatidylinositol 4,5-bisphosphate (PtdIns(4,5)P2/PIP2), a lipid second messenger that regulates several cellular processes such as signal transduction, vesicle trafficking, actin cytoskeleton dynamics, cell adhesion, and cell motility. PtdIns(4,5)P2 can directly act as a second messenger or can be utilized as a precursor to generate other second messengers: inositol 1,4,5-trisphosphate (IP3), diacylglycerol (DAG) or phosphatidylinositol-3,4,5-trisphosphate (PtdIns(3,4,5)P3/PIP3). Mediates RAC1-dependent reorganization of actin filaments. Contributes to the activation of phospholipase PLD2. Together with PIP5K1A, is required, after stimulation by G-protein coupled receptors, for the synthesis of IP3 that will induce stable platelet adhesion. This chain is Phosphatidylinositol 4-phosphate 5-kinase type-1 beta, found in Rattus norvegicus (Rat).